The primary structure comprises 180 residues: Large ribosomal subunit protein bL19 (180 aa).

Belongs to the bacterial ribosomal protein bL19 family.

This protein is located at the 30S-50S ribosomal subunit interface and may play a role in the structure and function of the aminoacyl-tRNA binding site. The sequence is that of Large ribosomal subunit protein bL19 from Allorhizobium ampelinum (strain ATCC BAA-846 / DSM 112012 / S4) (Agrobacterium vitis (strain S4)).